An 88-amino-acid chain; its full sequence is Large ribosomal subunit protein bL27 (88 aa).

Residues 1-25 (MAHKKGASSSRNGRDSNAQRLGVKR) are disordered. Residues 7-19 (ASSSRNGRDSNAQ) are compositionally biased toward polar residues.

The protein belongs to the bacterial ribosomal protein bL27 family.

The sequence is that of Large ribosomal subunit protein bL27 from Nocardia farcinica (strain IFM 10152).